The primary structure comprises 561 residues: Dihydroxy-acid dehydratase (561 aa).

A Mg(2+)-binding site is contributed by Asp-80. Cys-121 contributes to the [2Fe-2S] cluster binding site. Mg(2+) is bound by residues Asp-122 and Lys-123. Lys-123 carries the N6-carboxylysine modification. Cys-194 serves as a coordination point for [2Fe-2S] cluster. Position 448 (Glu-448) interacts with Mg(2+). Ser-474 functions as the Proton acceptor in the catalytic mechanism.

It belongs to the IlvD/Edd family. Homodimer. Requires [2Fe-2S] cluster as cofactor. Mg(2+) serves as cofactor.

It carries out the reaction (2R)-2,3-dihydroxy-3-methylbutanoate = 3-methyl-2-oxobutanoate + H2O. The catalysed reaction is (2R,3R)-2,3-dihydroxy-3-methylpentanoate = (S)-3-methyl-2-oxopentanoate + H2O. Its pathway is amino-acid biosynthesis; L-isoleucine biosynthesis; L-isoleucine from 2-oxobutanoate: step 3/4. It functions in the pathway amino-acid biosynthesis; L-valine biosynthesis; L-valine from pyruvate: step 3/4. Its function is as follows. Functions in the biosynthesis of branched-chain amino acids. Catalyzes the dehydration of (2R,3R)-2,3-dihydroxy-3-methylpentanoate (2,3-dihydroxy-3-methylvalerate) into 2-oxo-3-methylpentanoate (2-oxo-3-methylvalerate) and of (2R)-2,3-dihydroxy-3-methylbutanoate (2,3-dihydroxyisovalerate) into 2-oxo-3-methylbutanoate (2-oxoisovalerate), the penultimate precursor to L-isoleucine and L-valine, respectively. The protein is Dihydroxy-acid dehydratase of Anaeromyxobacter sp. (strain Fw109-5).